The chain runs to 407 residues: Argininosuccinate synthase (407 aa).

ATP contacts are provided by residues 13–21 and A40; that span reads AYSGGLDTS. Positions 91 and 96 each coordinate L-citrulline. ATP is bound at residue G121. T123, N127, and D128 together coordinate L-aspartate. Residue N127 participates in L-citrulline binding. Residues R131, S182, S191, E267, and Y279 each contribute to the L-citrulline site.

It belongs to the argininosuccinate synthase family. Type 1 subfamily. Homotetramer.

Its subcellular location is the cytoplasm. It catalyses the reaction L-citrulline + L-aspartate + ATP = 2-(N(omega)-L-arginino)succinate + AMP + diphosphate + H(+). It participates in amino-acid biosynthesis; L-arginine biosynthesis; L-arginine from L-ornithine and carbamoyl phosphate: step 2/3. The protein is Argininosuccinate synthase of Mesorhizobium japonicum (strain LMG 29417 / CECT 9101 / MAFF 303099) (Mesorhizobium loti (strain MAFF 303099)).